The sequence spans 339 residues: Glucokinase (339 aa).

ATP is bound at residue 16 to 21 (GDIGGT).

It belongs to the bacterial glucokinase family.

The protein localises to the cytoplasm. It catalyses the reaction D-glucose + ATP = D-glucose 6-phosphate + ADP + H(+). The protein is Glucokinase of Pseudomonas paraeruginosa (strain DSM 24068 / PA7) (Pseudomonas aeruginosa (strain PA7)).